The chain runs to 294 residues: N-acetylmuramic acid 6-phosphate etherase (294 aa).

The 164-residue stretch at 54-217 (VIQSFEEEGR…STASMIGVGK (164 aa)) folds into the SIS domain. Residue Glu-82 is the Proton donor of the active site. The active site involves Glu-113.

The protein belongs to the GCKR-like family. MurNAc-6-P etherase subfamily. Homodimer.

The catalysed reaction is N-acetyl-D-muramate 6-phosphate + H2O = N-acetyl-D-glucosamine 6-phosphate + (R)-lactate. It participates in amino-sugar metabolism; N-acetylmuramate degradation. Specifically catalyzes the cleavage of the D-lactyl ether substituent of MurNAc 6-phosphate, producing GlcNAc 6-phosphate and D-lactate. The protein is N-acetylmuramic acid 6-phosphate etherase of Bacillus cereus (strain 03BB102).